We begin with the raw amino-acid sequence, 184 residues long: (2E)-enoyl-[ACP] glycyltransferase (184 aa).

It belongs to the FcoT family.

The enzyme catalyses a (3R)-3-[(carboxymethyl)amino]fatty acid + holo-[ACP] + H(+) = a (2E)-enoyl-[ACP] + glycine + H2O. It catalyses the reaction (3R)-3-[(carboxylmethyl)amino]decanoate + holo-[ACP] + H(+) = (2E)-decenoyl-[ACP] + glycine + H2O. Functionally, involved in the biosynthesis of a unique class of isonitrile lipopeptides (INLPs) that seem to play a role in metal acquisition in M.marinum. Catalyzes a Michael addition of glycine to the beta-position of an alpha,beta-unsaturated fatty acyl-[ACP], producing a (3R)-3-[(carboxymethyl)amino]fatty acid. Acts on the (2E)-decenoyl moiety loaded on the acyl-carrier protein MmaB, forming the product (3R)-3-[(carboxymethyl)amino]decanoate released from MmaB. In Mycobacterium marinum (strain ATCC BAA-535 / M), this protein is (2E)-enoyl-[ACP] glycyltransferase.